We begin with the raw amino-acid sequence, 101 residues long: Small ribosomal subunit protein uS14 (101 aa).

The protein belongs to the universal ribosomal protein uS14 family. Part of the 30S ribosomal subunit. Contacts proteins S3 and S10.

Its function is as follows. Binds 16S rRNA, required for the assembly of 30S particles and may also be responsible for determining the conformation of the 16S rRNA at the A site. The polypeptide is Small ribosomal subunit protein uS14 (Cellvibrio japonicus (strain Ueda107) (Pseudomonas fluorescens subsp. cellulosa)).